Consider the following 34-residue polypeptide: Potassium channel toxin alpha-KTx 6 hetlaxin (34 aa).

4 disulfides stabilise this stretch: Cys-3–Cys-24, Cys-9–Cys-29, Cys-13–Cys-31, and Cys-19–Cys-34. Cys-34 is modified (cysteine amide).

In terms of processing, contains 4 disulfide bonds. As to expression, expressed by the venom gland.

Its subcellular location is the secreted. Its function is as follows. Binds to voltage-gated potassium channels Kv1.3/KCNA3 (IC(50)=0.48 uM) and Kv1.1/KCNA1 (IC(50)=6.7 uM) and inhibits channel activity. In Heterometrus laoticus (Thai giant scorpion), this protein is Potassium channel toxin alpha-KTx 6 hetlaxin.